The following is a 249-amino-acid chain: 2,3-bisphosphoglycerate-dependent phosphoglycerate mutase (249 aa).

Substrate contacts are provided by residues Arg9–Asn16, Thr22–Gly23, Arg61, Glu88–Tyr91, Lys99, Arg115–Arg116, and Gly184–Asn185. Residue His10 is the Tele-phosphohistidine intermediate of the active site. The active-site Proton donor/acceptor is Glu88.

Belongs to the phosphoglycerate mutase family. BPG-dependent PGAM subfamily. Homodimer.

The enzyme catalyses (2R)-2-phosphoglycerate = (2R)-3-phosphoglycerate. Its pathway is carbohydrate degradation; glycolysis; pyruvate from D-glyceraldehyde 3-phosphate: step 3/5. Functionally, catalyzes the interconversion of 2-phosphoglycerate and 3-phosphoglycerate. The chain is 2,3-bisphosphoglycerate-dependent phosphoglycerate mutase from Xylella fastidiosa (strain 9a5c).